The chain runs to 136 residues: Urease subunit beta (136 aa).

A disordered region spans residues 113 to 136 (NDEYAGVFGDNGAENVNKKGGKRS).

It belongs to the urease beta subunit family. As to quaternary structure, heterotrimer of UreA (gamma), UreB (beta) and UreC (alpha) subunits. Three heterotrimers associate to form the active enzyme.

It is found in the cytoplasm. It catalyses the reaction urea + 2 H2O + H(+) = hydrogencarbonate + 2 NH4(+). The protein operates within nitrogen metabolism; urea degradation; CO(2) and NH(3) from urea (urease route): step 1/1. In Staphylococcus aureus (strain USA300), this protein is Urease subunit beta.